A 100-amino-acid polypeptide reads, in one-letter code: Probable antitoxin MazE1 (100 aa).

Positions 77–100 are disordered; it reads PYESEAERSAARARRNARQQRSAQ.

In terms of assembly, forms a complex with cognate toxin MazF1.

Functionally, probable antitoxin component of a type II toxin-antitoxin (TA) system. Labile antitoxin that binds to cognate MazF1 toxin and counteracts its endoribonuclease activity. In Mycobacterium bovis (strain ATCC BAA-935 / AF2122/97), this protein is Probable antitoxin MazE1 (mazE1).